Reading from the N-terminus, the 784-residue chain is 5-methyltetrahydropteroyltriglutamate--homocysteine methyltransferase (784 aa).

Residues 16–19 (RELK) and Lys112 contribute to the 5-methyltetrahydropteroyltri-L-glutamate site. Residues 460-462 (IGS) and Glu513 each bind L-homocysteine. L-methionine is bound by residues 460–462 (IGS) and Glu513. Trp590 contacts 5-methyltetrahydropteroyltri-L-glutamate. An L-homocysteine-binding site is contributed by Asp628. Position 628 (Asp628) interacts with L-methionine. 5-methyltetrahydropteroyltri-L-glutamate is bound at residue Glu634. Positions 670, 672, and 694 each coordinate Zn(2+). The active-site Proton donor is the His723. Residue Cys755 coordinates Zn(2+).

This sequence belongs to the vitamin-B12 independent methionine synthase family. Zn(2+) is required as a cofactor.

It carries out the reaction 5-methyltetrahydropteroyltri-L-glutamate + L-homocysteine = tetrahydropteroyltri-L-glutamate + L-methionine. It functions in the pathway amino-acid biosynthesis; L-methionine biosynthesis via de novo pathway; L-methionine from L-homocysteine (MetE route): step 1/1. Catalyzes the transfer of a methyl group from 5-methyltetrahydrofolate to homocysteine resulting in methionine formation. The sequence is that of 5-methyltetrahydropteroyltriglutamate--homocysteine methyltransferase from Acidithiobacillus ferrooxidans (strain ATCC 23270 / DSM 14882 / CIP 104768 / NCIMB 8455) (Ferrobacillus ferrooxidans (strain ATCC 23270)).